Here is a 1704-residue protein sequence, read N- to C-terminus: MASPIIQPAGAGIHDIFTQLELWESIDKGLSMITILRDNDVLWKPFLQLTLFNQLNIVRKAWSATIQKASESDKVPTLKDVYTSESSFIAQALLDTKNLQITPPATPRTALSGALLAKTIVIFHHSERAQEELGTELPEEVRSLVNQNAICLKVLYNANQWHIDLHYKRDSLSSAQAGEVAEIFEQYLEEALEAVASAIPPSPPVEDDNAGHGGLCKERTDCPKVNRCIHDLIEEQAIARPDQEGICAYDGSLSYAGLSKLSSVLAEQLKTFGARPEQRVAILMNKSFWYPVVVLAVLKSGAAFVPLDPSHPKNRLKQLISEIEPCALITTSVLSELADDLGCPSLAIDSDLTRSKEGSTTALLPNTSASPNNAAYIIFTSGSTGKPKGVVVEHSALSTSAITRGVVLGLGPDSRVLQYAPHTFDVSVDEILTTLIHGGCVCVPSEDDRFSIAHFMESARVTVALLTPTSARTLHPDEVPSLRILQTGGEVLTEDVNDKWSNRVTLFNVYGPTEASVACVISNRTGLKGAGHVLGQAVGGKLWIVDPDDIERHLPDNEVGELVISGAILARGYFRDPSRTESSFVRMRNGERVYRTGDLASMDSAGTIIYHGRKDLEVKIRGQRINIAEIEIAILQCDLVHSVVVEYPRSGLFEKKLVAVLRFEDSSSDAEDGLFGGAKGLTEDIYCLLLSHVSSVLTPAMIPSKWLSLPCVPQMPSGKADRKQVRGWLEDMDKRTYTRIFHPNGTDNLISDPSDSMVAIWLKVLKLEPQSLRLDQSFIRNGGDSIMAMEARHQAHEAGINIDVRELLGSRALQEIGEMATKTSAVEEVSKIEDDRDEPFPLSPVQQMYFDKVSDPSLGLQQRVCVEIMTKIQPDMLREALNHVIQKHRMLAARFTKHMGQWMQQVPFGKNLKHLSRCHIYSQAVGSLGDFCSEPMALEDGTLLHAHLQSSGERQTLVLCVHHLVVDFVSWRVILQDLHDALAAAQNGLPSGISRSTLTFQQWCREQTKYASTLIPEAVLPFAPGPVNLRFWQPSNVQAVSNTYSEIVQHDFRLSSTQTTQMLEKFTTATVHPTDLMLATFALAFKRIFTERDTPTIFIEGHGREPWHASLDVSQTVGWFTAAFPIHLPKDTLLNTTTAILGASERRRSVLANGHPYWACRYLSPNGQKVFGDDPRHQEMEFVFNYAGSIVQRAPGQTLFAENVRIAEIGHPNCERFSLFDIGAAIEMPSSELVVSFTFPKGIAHRERVAELVKTYQELLETAVERDLDLSAKLSSPLVCPADVVRSLEVNGVCIERDVEIVYTPSSIQQHMLWRQSQEPWFYRVQGDWTIEKTTTQSEPVDIDRLSHAWNQVVHRHTTLRTVFRYSSEEERFVAIVLHEVKPAISIIRKGIQTSGSLCRDDDLSPPHRMVLREKDNGSVVCELEFSHTIIDAASRSIVVQDLLDAYDGKLAHRPLDFPPFWEYIRLAQSSTPSARKEELHRAGRVVTLPFQPTHVLSKVPEACKKNEITISSFFMTAWSIVLAKHFVAHNQRVDSTSSQAVAFDYVLSDRSANIPGIESAVGPYIRLPTLETHVKEGVSLKNIARGLHAQCTFQSLSQSTQDGSSLELPSKATALQKYSTLVNIRNSGSDSLDLVSDSGEWKWILQGFSDPWDYDLVFAVNVHAGKVTGWTVEYADGVVEHSAADEIAKDLNDVVERMVCEII.

The segment at 234 to 620 (EEQAIARPDQ…HGRKDLEVKI (387 aa)) is adenylation. The Carrier domain occupies 748–827 (NLISDPSDSM…EMATKTSAVE (80 aa)). Ser-785 carries the O-(pantetheine 4'-phosphoryl)serine modification. The tract at residues 840–1266 (FPLSPVQQMY…QELLETAVER (427 aa)) is epimerization (E) domain. The interval 1325–1477 (VQGDWTIEKT…AQSSTPSARK (153 aa)) is condensation.

It belongs to the NRP synthetase family.

It carries out the reaction L-tryptophan + ATP + H2O = D-tryptophan + AMP + diphosphate + H(+). It functions in the pathway pigment biosynthesis. Its function is as follows. Nonribosomal peptide synthetase; part of the pathway that mediates the biosynthesis of the gray-brown conidiophore pigment. The first step of the pathway is performed by the nonribosomal peptide synthetase ivoA that catalyzes ATP-dependent unidirectional stereoinversion of L-tryptophan to D-tryptophan with complete conversion. While the stereoinversion is catalyzed by the epimerization (E) domain of ivoA, the terminal condensation (C) domain stereoselectively hydrolyzes D-tryptophanyl-S-phosphopantetheine thioester and thus represents a non-canonical C domain function. D-tryptophan is acetylated, probably by an endogenous acetyltransferase. N-acetyltryptophan is further 6-hydroxylated into N-acetyl-6-hydroxytryptophan (AHT) by the cytochrome P450 monooxygenase ivoC. N-acetyl-6-hydroxytryptophan is substrate of the N-acetyl-6-hydroxytryptophan oxidase ivoB to produce the gray-brown conidiophore pigment. This is Nonribosomal peptide synthetase ivoA from Emericella nidulans (strain FGSC A4 / ATCC 38163 / CBS 112.46 / NRRL 194 / M139) (Aspergillus nidulans).